The primary structure comprises 205 residues: uncharacterized protein (205 aa).

The segment at 1–42 (MSRKRDKPYTNRHTPARISKRRRPWAPSSSEHDEIIDKPITK) is disordered. Residues 14-24 (TPARISKRRRP) show a composition bias toward basic residues. The segment covering 30 to 40 (SEHDEIIDKPI) has biased composition (basic and acidic residues). Positions 47-122 (PALVVMGLPA…KKLEVVWATD (76 aa)) constitute an RRM domain. The tract at residues 170-191 (PRSDNTKGISGDGGISSPATTS) is disordered.

This is an uncharacterized protein from Arabidopsis thaliana (Mouse-ear cress).